The sequence spans 203 residues: MAQQRVLPQSKETLLQSYNKRLKDDVKSIMDNFTEIIKTAKIEDETQVSRATQSEQDNYEMHVRAANIVRAGESLMKLVSDLKQFLILNDFPSVNEAINQRNQQLRSLQEECDKKLIALRDEISIDLYELEEEYYSSSYSLCDSNDLPLCEAYWREDFDMPSPESLSMPLTTATAEQSIATSQSSTPSHPHVNGHGAGPTDHS.

A coiled-coil region spans residues 93 to 123 (SVNEAINQRNQQLRSLQEECDKKLIALRDEI). The span at 164–188 (ESLSMPLTTATAEQSIATSQSSTPS) shows a compositional bias: polar residues. The interval 164–203 (ESLSMPLTTATAEQSIATSQSSTPSHPHVNGHGAGPTDHS) is disordered.

Belongs to the Mediator complex subunit 22 family. As to quaternary structure, component of the Mediator complex.

It localises to the nucleus. Functionally, component of the Mediator complex, a coactivator involved in the regulated transcription of nearly all RNA polymerase II-dependent genes. Mediator functions as a bridge to convey information from gene-specific regulatory proteins to the basal RNA polymerase II transcription machinery. Mediator is recruited to promoters by direct interactions with regulatory proteins and serves as a scaffold for the assembly of a functional preinitiation complex with RNA polymerase II and the general transcription factors. In Gallus gallus (Chicken), this protein is Mediator of RNA polymerase II transcription subunit 22 (MED22).